A 681-amino-acid chain; its full sequence is MIYQEENQHLRIGLASPEEIRGWAERTLPNGEVVGRITEPYTLHYKTHKPEKDGLFCERIFGPIKSGICACGKYRSIENQREYSKICEQCGVEFTESRVRRYRMGYIELACPVTHVWYLKRLPSYIANLLAKPLKELESLVYCDLFLARPIAKKPTLLKLRGLFKYEDQSWKEIFPRFFSPRGFEAFQDREVATGGNAIEKGLASLNLQIVMDRAYMEWRNLTEQKSTGNEWEDRKIQRRKDLLVRRMELAKNFLQTNMKPEWMVLSLLPVLPPELRPMIELGEGELITSDLNELYRRVIYRNNTLLDFLARGRSTPGGLVVCQKRLVQEAVDALIDNGIRGQPMRDSHNRAYKSFSDLIEGKEGRFRENLLGKRVDYSGRSVIVAGPYLPLHECGLPKEMAVELFQAFVIRGLIGRYLAPNLRAAKSMIQDKEPIIWKILKEVIQGHPVLLNRAPTLHRLGIQAFEPILVEGRAIRLHPLVCAGFNADFDGDQMAVHIPLSLEAQVEARLLMFSHTNLLSPVTGNPVSVPSQDMLLGIYVSTIRSNRGIYQNQYHPYDYRNKNFSYKMFYFHSYDDILKAEKQKQINLHSPLWLRWQVDLHIVTSIDREVPIEIQYESLGTSSQIYENYQFRKNRKEKILSMYICTTAGRILFNQQIEEAIQGFFEVSQHRSRPLPAIIA.

Residues Cys69, Cys71, Cys87, and Cys90 each contribute to the Zn(2+) site. The Mg(2+) site is built by Asp489, Asp491, and Asp493.

This sequence belongs to the RNA polymerase beta' chain family. RpoC1 subfamily. As to quaternary structure, in plastids the minimal PEP RNA polymerase catalytic core is composed of four subunits: alpha, beta, beta', and beta''. When a (nuclear-encoded) sigma factor is associated with the core the holoenzyme is formed, which can initiate transcription. The cofactor is Mg(2+). Zn(2+) serves as cofactor.

The protein resides in the plastid. The protein localises to the chloroplast. The catalysed reaction is RNA(n) + a ribonucleoside 5'-triphosphate = RNA(n+1) + diphosphate. Functionally, DNA-dependent RNA polymerase catalyzes the transcription of DNA into RNA using the four ribonucleoside triphosphates as substrates. This is DNA-directed RNA polymerase subunit beta' from Anthoceros angustus (Hornwort).